The following is a 503-amino-acid chain: Variant surface glycoprotein ILTAT 1.3 (503 aa).

A signal peptide spans 1 to 29 (MTKAYENRMLLQALVLAAVLCTTHAEGTA). Intrachain disulfides connect C42–C168 and C150–C206. 2 N-linked (GlcNAc...) asparagine glycosylation sites follow: N419 and N432. D480 carries the GPI-anchor amidated aspartate lipid modification. Positions 481 to 503 (SSFILNKQFALSVVSAAFAALLF) are cleaved as a propeptide — removed in mature form.

It localises to the cell membrane. Its function is as follows. VSG forms a coat on the surface of the parasite. The trypanosome evades the immune response of the host by expressing a series of antigenically distinct VSGs from an estimated 1000 VSG genes. In Trypanosoma brucei brucei, this protein is Variant surface glycoprotein ILTAT 1.3.